Reading from the N-terminus, the 419-residue chain is L-rhamnose isomerase (419 aa).

Residues His262, Asp294, and Asp296 each coordinate Mn(2+).

It belongs to the rhamnose isomerase family. As to quaternary structure, homotetramer. Mn(2+) serves as cofactor.

Its subcellular location is the cytoplasm. The enzyme catalyses L-rhamnopyranose = L-rhamnulose. It participates in carbohydrate degradation; L-rhamnose degradation; glycerone phosphate from L-rhamnose: step 1/3. Catalyzes the interconversion of L-rhamnose and L-rhamnulose. The sequence is that of L-rhamnose isomerase from Salmonella enteritidis PT4 (strain P125109).